Consider the following 307-residue polypeptide: PCP degradation transcriptional activation protein (307 aa).

The HTH lysR-type domain occupies 6–63 (LPLGHLMVFDALYRHGSAGKAAHALSMPQPTLSRWLAQLRTHFDDPLFVRTRSGMEPT). Residues 23–42 (AGKAAHALSMPQPTLSRWLA) constitute a DNA-binding region (H-T-H motif).

It belongs to the LysR transcriptional regulatory family.

Its function is as follows. Transcriptional activator for the pcpA, pcpB and pcpE genes for pentachlorophenol (PCP) degradation. Essential for PCP degradation. The sequence is that of PCP degradation transcriptional activation protein (pcpR) from Sphingobium chlorophenolicum.